A 99-amino-acid chain; its full sequence is Acylphosphatase-1 (99 aa).

The residue at position 2 (Ala2) is an N-acetylalanine. In terms of domain architecture, Acylphosphatase-like spans 9–99 (SVDYEIFGKV…LDYSDFQIVK (91 aa)). Active-site residues include Arg24 and Asn42.

It belongs to the acylphosphatase family.

It carries out the reaction an acyl phosphate + H2O = a carboxylate + phosphate + H(+). The sequence is that of Acylphosphatase-1 (Acyp1) from Mus musculus (Mouse).